The primary structure comprises 484 residues: uncharacterized protein (484 aa).

12 helical membrane passes run 19-39 (LSFG…MIFV), 78-98 (VNWG…WLIV), 111-131 (FFML…FIIL), 134-154 (IFAI…SNYL), 165-185 (FSPF…AGII), 199-219 (IVFL…IILG), 249-269 (TWYW…PFTF), 289-309 (ISVF…TIGL), 321-341 (ISTI…VFVL), 360-380 (LFLF…GVML), 398-418 (FGLI…ITSL), and 440-460 (LGAY…LALL).

It is found in the cell membrane. This is an uncharacterized protein from Mesomycoplasma hyopneumoniae (strain 232) (Mycoplasma hyopneumoniae).